We begin with the raw amino-acid sequence, 155 residues long: Small ribosomal subunit protein uS7 (155 aa).

It belongs to the universal ribosomal protein uS7 family. As to quaternary structure, part of the 30S ribosomal subunit. Contacts proteins S9 and S11.

In terms of biological role, one of the primary rRNA binding proteins, it binds directly to 16S rRNA where it nucleates assembly of the head domain of the 30S subunit. Is located at the subunit interface close to the decoding center, probably blocks exit of the E-site tRNA. The chain is Small ribosomal subunit protein uS7 from Cytophaga hutchinsonii (strain ATCC 33406 / DSM 1761 / CIP 103989 / NBRC 15051 / NCIMB 9469 / D465).